Reading from the N-terminus, the 79-residue chain is Large ribosomal subunit protein bL28 (79 aa).

This sequence belongs to the bacterial ribosomal protein bL28 family.

In Blochmanniella floridana, this protein is Large ribosomal subunit protein bL28.